A 448-amino-acid chain; its full sequence is Asparagine--tRNA ligase (448 aa).

The protein belongs to the class-II aminoacyl-tRNA synthetase family. In terms of assembly, homodimer.

It localises to the cytoplasm. It catalyses the reaction tRNA(Asn) + L-asparagine + ATP = L-asparaginyl-tRNA(Asn) + AMP + diphosphate + H(+). This chain is Asparagine--tRNA ligase, found in Streptococcus agalactiae serotype Ia (strain ATCC 27591 / A909 / CDC SS700).